The primary structure comprises 72 residues: Translation initiation factor IF-1 (72 aa).

In terms of domain architecture, S1-like spans 1–72 (MAKDDVIEID…DKGRITFRYK (72 aa)).

It belongs to the IF-1 family. As to quaternary structure, component of the 30S ribosomal translation pre-initiation complex which assembles on the 30S ribosome in the order IF-2 and IF-3, IF-1 and N-formylmethionyl-tRNA(fMet); mRNA recruitment can occur at any time during PIC assembly.

It is found in the cytoplasm. In terms of biological role, one of the essential components for the initiation of protein synthesis. Stabilizes the binding of IF-2 and IF-3 on the 30S subunit to which N-formylmethionyl-tRNA(fMet) subsequently binds. Helps modulate mRNA selection, yielding the 30S pre-initiation complex (PIC). Upon addition of the 50S ribosomal subunit IF-1, IF-2 and IF-3 are released leaving the mature 70S translation initiation complex. This is Translation initiation factor IF-1 from Campylobacter jejuni subsp. doylei (strain ATCC BAA-1458 / RM4099 / 269.97).